We begin with the raw amino-acid sequence, 421 residues long: Histidine--tRNA ligase (421 aa).

Belongs to the class-II aminoacyl-tRNA synthetase family. In terms of assembly, homodimer.

It is found in the cytoplasm. The catalysed reaction is tRNA(His) + L-histidine + ATP = L-histidyl-tRNA(His) + AMP + diphosphate + H(+). This Francisella tularensis subsp. mediasiatica (strain FSC147) protein is Histidine--tRNA ligase.